The sequence spans 87 residues: Small ribosomal subunit protein bS18 (87 aa).

The protein belongs to the bacterial ribosomal protein bS18 family. Part of the 30S ribosomal subunit. Forms a tight heterodimer with protein bS6.

Its function is as follows. Binds as a heterodimer with protein bS6 to the central domain of the 16S rRNA, where it helps stabilize the platform of the 30S subunit. The chain is Small ribosomal subunit protein bS18 from Mesomycoplasma hyopneumoniae (strain 232) (Mycoplasma hyopneumoniae).